The primary structure comprises 147 residues: Large ribosomal subunit protein uL11 (147 aa).

This sequence belongs to the universal ribosomal protein uL11 family. As to quaternary structure, part of the ribosomal stalk of the 50S ribosomal subunit. Interacts with L10 and the large rRNA to form the base of the stalk. L10 forms an elongated spine to which L12 dimers bind in a sequential fashion forming a multimeric L10(L12)X complex. In terms of processing, one or more lysine residues are methylated.

Functionally, forms part of the ribosomal stalk which helps the ribosome interact with GTP-bound translation factors. The protein is Large ribosomal subunit protein uL11 of Phocaeicola vulgatus (strain ATCC 8482 / DSM 1447 / JCM 5826 / CCUG 4940 / NBRC 14291 / NCTC 11154) (Bacteroides vulgatus).